Consider the following 485-residue polypeptide: Glutamyl-tRNA(Gln) amidotransferase subunit A (485 aa).

Active-site charge relay system residues include Lys-79 and Ser-154. Ser-178 (acyl-ester intermediate) is an active-site residue.

Belongs to the amidase family. GatA subfamily. In terms of assembly, heterotrimer of A, B and C subunits.

It carries out the reaction L-glutamyl-tRNA(Gln) + L-glutamine + ATP + H2O = L-glutaminyl-tRNA(Gln) + L-glutamate + ADP + phosphate + H(+). In terms of biological role, allows the formation of correctly charged Gln-tRNA(Gln) through the transamidation of misacylated Glu-tRNA(Gln) in organisms which lack glutaminyl-tRNA synthetase. The reaction takes place in the presence of glutamine and ATP through an activated gamma-phospho-Glu-tRNA(Gln). This Geobacillus stearothermophilus (Bacillus stearothermophilus) protein is Glutamyl-tRNA(Gln) amidotransferase subunit A.